The sequence spans 188 residues: Adenine phosphoribosyltransferase (188 aa).

The protein belongs to the purine/pyrimidine phosphoribosyltransferase family. Homodimer.

It is found in the cytoplasm. It catalyses the reaction AMP + diphosphate = 5-phospho-alpha-D-ribose 1-diphosphate + adenine. It participates in purine metabolism; AMP biosynthesis via salvage pathway; AMP from adenine: step 1/1. Functionally, catalyzes a salvage reaction resulting in the formation of AMP, that is energically less costly than de novo synthesis. The polypeptide is Adenine phosphoribosyltransferase (Paraburkholderia phytofirmans (strain DSM 17436 / LMG 22146 / PsJN) (Burkholderia phytofirmans)).